The primary structure comprises 966 residues: Calsyntenin-2 (966 aa).

A signal peptide spans 1–20 (MLPGRLCLVPLLLALGVGSG). The Extracellular portion of the chain corresponds to 21-835 (GGSGDGGDSR…SIQRSSVVPS (815 aa)). Cadherin domains lie at 46-162 (IETS…APTF) and 163-282 (KEPA…MPLF). 2 N-linked (GlcNAc...) asparagine glycosylation sites follow: Asn-58 and Asn-100. Residues Asn-344, Asn-376, Asn-720, and Asn-733 are each glycosylated (N-linked (GlcNAc...) asparagine). The chain crosses the membrane as a helical span at residues 836–856 (IATVVIIISVCMLVFVVAMGV). Residues 857–966 (YRVRIAHQHF…NTAGVINIWK (110 aa)) lie on the Cytoplasmic side of the membrane. The disordered stretch occupies residues 890–966 (NPMEKHEGPG…NTAGVINIWK (77 aa)). Acidic residues predominate over residues 901-916 (GEDETTEVEEEEEAEE). Residues 943–960 (QSGTSSQSPERSTWNTAG) show a composition bias toward polar residues.

This sequence belongs to the calsyntenin family. In terms of processing, proteolytically processed under normal cellular conditions. A primary zeta-cleavage generates a large extracellular (soluble) N-terminal domain (sAlc) and a short C-terminal transmembrane fragment (CTF1). A secondary cleavage catalyzed by gamma-secretase within the transmembrane domain releases the beta-Alc-gamma chain in the extracellular milieu and produces an intracellular fragment (AlcICD). This processing is strongly suppressed in the tripartite complex formed with APBA2 and APP, which seems to prevent the association with PSEN1. Restricted to the brain. In the cerebral cortex, found in the somas and neuropil of all layers. Expressed at highest levels in neurons of cortical layers 5 and 6 and, at lower levels, in neurons of the upper layers. Highly expressed in Purkinje cells. Also found in a few scattered interneurons throughout the granule cell layer and occasionally in neurons in the molecular layer (at protein level). Present throughout all cortical layers, highest levels in GABAergic neurons (based on morphology and distribution pattern).

Its subcellular location is the postsynaptic cell membrane. The protein localises to the endoplasmic reticulum membrane. It localises to the golgi apparatus membrane. The protein resides in the cell projection. It is found in the dendrite. Its function is as follows. Postsynaptic adhesion molecule that binds to presynaptic neurexins to mediate synapse formation, and which is involved in learning and memory. Promotes synapse development by acting as a cell adhesion molecule at the postsynaptic membrane, which associates with neurexin-alpha at the presynaptic membrane. The protein is Calsyntenin-2 of Mus musculus (Mouse).